We begin with the raw amino-acid sequence, 245 residues long: Eukaryotic translation initiation factor 3 subunit K (245 aa).

The PCI domain maps to Tyr-46–Asn-227.

The protein belongs to the eIF-3 subunit K family. As to quaternary structure, component of the eukaryotic translation initiation factor 3 (eIF-3) complex.

Its subcellular location is the cytoplasm. Functionally, component of the eukaryotic translation initiation factor 3 (eIF-3) complex, which is involved in protein synthesis of a specialized repertoire of mRNAs and, together with other initiation factors, stimulates binding of mRNA and methionyl-tRNAi to the 40S ribosome. The eIF-3 complex specifically targets and initiates translation of a subset of mRNAs involved in cell proliferation. In Sclerotinia sclerotiorum (strain ATCC 18683 / 1980 / Ss-1) (White mold), this protein is Eukaryotic translation initiation factor 3 subunit K.